Here is a 961-residue protein sequence, read N- to C-terminus: Glycine dehydrogenase (decarboxylating) (961 aa).

An N6-(pyridoxal phosphate)lysine modification is found at Lys709.

Belongs to the GcvP family. In terms of assembly, the glycine cleavage system is composed of four proteins: P, T, L and H. The cofactor is pyridoxal 5'-phosphate.

It catalyses the reaction N(6)-[(R)-lipoyl]-L-lysyl-[glycine-cleavage complex H protein] + glycine + H(+) = N(6)-[(R)-S(8)-aminomethyldihydrolipoyl]-L-lysyl-[glycine-cleavage complex H protein] + CO2. Functionally, the glycine cleavage system catalyzes the degradation of glycine. The P protein binds the alpha-amino group of glycine through its pyridoxal phosphate cofactor; CO(2) is released and the remaining methylamine moiety is then transferred to the lipoamide cofactor of the H protein. In Teredinibacter turnerae (strain ATCC 39867 / T7901), this protein is Glycine dehydrogenase (decarboxylating).